The following is a 204-amino-acid chain: Transcription factor bHLH120 (204 aa).

Disordered regions lie at residues 1 to 27 (MNPS…KKEK) and 93 to 116 (KREI…RSEP). One can recognise a bHLH domain in the interval 26–78 (EKKLLHRNIERQRRQEMAILFASLRSQLPLKYIKGKRAMSDHVNGAVSFIKDT).

As to quaternary structure, homodimer.

The protein localises to the nucleus. In Arabidopsis thaliana (Mouse-ear cress), this protein is Transcription factor bHLH120 (BHLH120).